The chain runs to 512 residues: Polyamine oxidase 1 (512 aa).

Positions 38 and 46 each coordinate FAD. A disordered region spans residues 448–470; sequence DRMAEPLPRGPDAAADERPPSPR. An FAD-binding site is contributed by E476.

It belongs to the flavin monoamine oxidase family. The cofactor is FAD.

The protein resides in the cytoplasm. It carries out the reaction spermine + O2 + H2O = 3-aminopropanal + spermidine + H2O2. The catalysed reaction is N(1)-acetylspermine + O2 + H2O = 3-acetamidopropanal + spermidine + H2O2. The enzyme catalyses norspermine + O2 + H2O = norspermidine + 3-aminopropanal + H2O2. It catalyses the reaction thermospermine + O2 + H2O = 3-aminopropanal + spermidine + H2O2. The protein operates within amine and polyamine degradation; spermine degradation. Its function is as follows. Flavoenzyme involved in polyamine back-conversion. Catalyzes the oxidation of the secondary amino group of polyamines, such as spermine and its acetyl derivatives. Substrate preference is thermospermine &gt; spermine &gt; norspermine &gt; N(1)-acetylspermine. No activity detected when putrescine or spermidine are used as substrates. Plays an important role in the regulation of polyamine intracellular concentration. This is Polyamine oxidase 1 from Oryza sativa subsp. japonica (Rice).